The following is a 425-amino-acid chain: Sodium-dependent glucose transporter 1A (425 aa).

11 helical membrane passes run 35-55 (LIFV…GVLF), 61-81 (FFLL…IPFC), 84-104 (AVLL…VDTG), 123-143 (ALHF…KLAW), 183-203 (WAYA…FGLF), 228-248 (ALLC…ITYG), 271-291 (SIFW…ATFL), 294-314 (GTMI…LVLF), 320-340 (CLWI…PSGI), 355-375 (AFFV…IGIL), and 382-402 (LPVV…LFPV).

It belongs to the major facilitator superfamily.

The protein resides in the apical cell membrane. Functionally, may function as a sodium-dependent glucose transporter. Potential channels for urea in the inner medulla of kidney. This Mus musculus (Mouse) protein is Sodium-dependent glucose transporter 1A.